The chain runs to 435 residues: T-box transcription factor T (435 aa).

The T-box DNA-binding region spans 51–219 (LWLRFKELTN…YNPFAKAFLD (169 aa)). 2 disordered regions span residues 280–310 (PALR…PSAC) and 384–412 (APLG…DVPD). The span at 297–310 (RNNSPTYSDNPSAC) shows a compositional bias: polar residues.

Monomer. Binds DNA as a monomer.

It is found in the nucleus. Functionally, involved in the transcriptional regulation of genes required for mesoderm formation and differentiation. Binds to a palindromic site (called T site) and activates gene transcription when bound to such a site. This chain is T-box transcription factor T, found in Canis lupus familiaris (Dog).